A 346-amino-acid polypeptide reads, in one-letter code: MHVLIACPYCPYPPSTPKHPKLPPKVKPPSTQPPHVKPPSTPKHPKDPPHVKPPSTPKQPPYVKPPTTPKHPPHVKPPSTPKHPKHPPQKPCPPPSHHGPKPPIVKPPHVPRPPIVHPPPIVSPPSTPKPPKTPPFTPKPPSPIPPIVSPPIVYPPITPTPPIVHPPVTPKPPSPTPPIVSPPIVYPPITPTPPVVSPPIIPTPPIVSPPFVPNPPVVIPPPYVPSPPVVTPPIVPTPPTPCPPPPPPPAIIPSPPAQPTCPIDALKLGACVDVLGGLIHIGIGGSAKQTCCPLLGGLVDLDAAICLCTTIRLKLLNINIILPIALQVLIDDCGKYPPKDFKCPST.

The segment at 11-144 is disordered; sequence PYPPSTPKHP…PFTPKPPSPI (134 aa). 3 stretches are compositionally biased toward pro residues: residues 25-42, 51-81, and 89-144; these read KVKP…PSTP, VKPP…PSTP, and QKPC…PSPI.

The chain is 36.4 kDa proline-rich protein (TPRP-F1) from Solanum lycopersicum (Tomato).